A 253-amino-acid polypeptide reads, in one-letter code: Putative cysteine-rich repeat secretory protein 33 (253 aa).

The N-terminal stretch at 1-28 is a signal peptide; the sequence is MFSSYSLCKCLVSFHILAIQVLISCASS. Gnk2-homologous domains lie at 34-133 and 141-250; these read EYLN…MIND and YDNI…LYPF.

This sequence belongs to the cysteine-rich repeat secretory protein family.

It localises to the secreted. The sequence is that of Putative cysteine-rich repeat secretory protein 33 (CRRSP33) from Arabidopsis thaliana (Mouse-ear cress).